The primary structure comprises 70 residues: Omega-conotoxin-like Bu1 (70 aa).

Residues methionine 1–alanine 22 form the signal peptide. A propeptide spanning residues glutamate 23–arginine 45 is cleaved from the precursor. 3 disulfides stabilise this stretch: cysteine 46-cysteine 61, cysteine 53-cysteine 65, and cysteine 60-cysteine 70.

It belongs to the conotoxin O1 superfamily. As to expression, expressed by the venom duct.

It is found in the secreted. Its function is as follows. Omega-conotoxins act at presynaptic membranes, they bind and block voltage-gated calcium channels (Cav). The protein is Omega-conotoxin-like Bu1 of Conus bullatus (Bubble cone).